Consider the following 189-residue polypeptide: Peptidyl-tRNA hydrolase (189 aa).

Tyr15 lines the tRNA pocket. His20 (proton acceptor) is an active-site residue. TRNA-binding residues include Phe66, Asn68, and Asn114.

Belongs to the PTH family. As to quaternary structure, monomer.

Its subcellular location is the cytoplasm. The enzyme catalyses an N-acyl-L-alpha-aminoacyl-tRNA + H2O = an N-acyl-L-amino acid + a tRNA + H(+). In terms of biological role, hydrolyzes ribosome-free peptidyl-tRNAs (with 1 or more amino acids incorporated), which drop off the ribosome during protein synthesis, or as a result of ribosome stalling. Functionally, catalyzes the release of premature peptidyl moieties from peptidyl-tRNA molecules trapped in stalled 50S ribosomal subunits, and thus maintains levels of free tRNAs and 50S ribosomes. This chain is Peptidyl-tRNA hydrolase, found in Streptococcus pneumoniae (strain CGSP14).